Consider the following 140-residue polypeptide: Nucleoside diphosphate kinase (140 aa).

ATP is bound by residues Lys-11, Phe-59, Arg-87, Thr-93, Arg-104, and Asn-114. Residue His-117 is the Pros-phosphohistidine intermediate of the active site.

Belongs to the NDK family. As to quaternary structure, homotetramer. Mg(2+) is required as a cofactor.

It localises to the cytoplasm. It carries out the reaction a 2'-deoxyribonucleoside 5'-diphosphate + ATP = a 2'-deoxyribonucleoside 5'-triphosphate + ADP. The enzyme catalyses a ribonucleoside 5'-diphosphate + ATP = a ribonucleoside 5'-triphosphate + ADP. Functionally, major role in the synthesis of nucleoside triphosphates other than ATP. The ATP gamma phosphate is transferred to the NDP beta phosphate via a ping-pong mechanism, using a phosphorylated active-site intermediate. This Francisella tularensis subsp. holarctica (strain LVS) protein is Nucleoside diphosphate kinase.